The chain runs to 513 residues: GMP synthase [glutamine-hydrolyzing] (513 aa).

A Glutamine amidotransferase type-1 domain is found at 9 to 198; that stretch reads LILVLDFGSQ…VRRVCDCIGE (190 aa). Cysteine 86 acts as the Nucleophile in catalysis. Residues histidine 172 and glutamate 174 contribute to the active site. Positions 199–388 constitute a GMPS ATP-PPase domain; that stretch reads WSMENFIEIE…LGIPEHLVWR (190 aa). ATP is bound at residue 226-232; it reads SGGVDSS.

In terms of assembly, homodimer.

The enzyme catalyses XMP + L-glutamine + ATP + H2O = GMP + L-glutamate + AMP + diphosphate + 2 H(+). It functions in the pathway purine metabolism; GMP biosynthesis; GMP from XMP (L-Gln route): step 1/1. Its function is as follows. Catalyzes the synthesis of GMP from XMP. This chain is GMP synthase [glutamine-hydrolyzing], found in Staphylococcus saprophyticus subsp. saprophyticus (strain ATCC 15305 / DSM 20229 / NCIMB 8711 / NCTC 7292 / S-41).